The following is a 188-amino-acid chain: Pyridoxal 5'-phosphate synthase subunit PdxT (188 aa).

Residue 46–48 (GES) coordinates L-glutamine. Cysteine 78 serves as the catalytic Nucleophile. L-glutamine is bound by residues arginine 105 and 134–135 (IR). Active-site charge relay system residues include histidine 170 and glutamate 172.

Belongs to the glutaminase PdxT/SNO family. In the presence of PdxS, forms a dodecamer of heterodimers. Only shows activity in the heterodimer.

The catalysed reaction is aldehydo-D-ribose 5-phosphate + D-glyceraldehyde 3-phosphate + L-glutamine = pyridoxal 5'-phosphate + L-glutamate + phosphate + 3 H2O + H(+). The enzyme catalyses L-glutamine + H2O = L-glutamate + NH4(+). The protein operates within cofactor biosynthesis; pyridoxal 5'-phosphate biosynthesis. Its function is as follows. Catalyzes the hydrolysis of glutamine to glutamate and ammonia as part of the biosynthesis of pyridoxal 5'-phosphate. The resulting ammonia molecule is channeled to the active site of PdxS. This chain is Pyridoxal 5'-phosphate synthase subunit PdxT, found in Thermotoga maritima (strain ATCC 43589 / DSM 3109 / JCM 10099 / NBRC 100826 / MSB8).